The primary structure comprises 208 residues: uncharacterized protein (208 aa).

Residues 1–16 (MKFLLIACLAVPAILA) form the signal peptide. N79 carries an N-linked (GlcNAc...) asparagine glycan.

This is an uncharacterized protein from Caenorhabditis elegans.